The chain runs to 123 residues: Putative outer membrane protein CPn_0818/CP_1053/CPj0818/CpB0847 (123 aa).

The first 30 residues, 1–30 (MKRQKRKQSITLIEMMVVITLIGIIGGALA), serve as a signal peptide directing secretion.

The protein localises to the cell outer membrane. The chain is Putative outer membrane protein CPn_0818/CP_1053/CPj0818/CpB0847 from Chlamydia pneumoniae (Chlamydophila pneumoniae).